Reading from the N-terminus, the 290-residue chain is Acetylglutamate kinase (290 aa).

Substrate is bound by residues 65–66 (GG), Arg-87, and Asn-186.

The protein belongs to the acetylglutamate kinase family. ArgB subfamily.

Its subcellular location is the cytoplasm. It catalyses the reaction N-acetyl-L-glutamate + ATP = N-acetyl-L-glutamyl 5-phosphate + ADP. It participates in amino-acid biosynthesis; L-arginine biosynthesis; N(2)-acetyl-L-ornithine from L-glutamate: step 2/4. Catalyzes the ATP-dependent phosphorylation of N-acetyl-L-glutamate. This Mycobacterium sp. (strain JLS) protein is Acetylglutamate kinase.